The sequence spans 171 residues: Endoribonuclease YbeY (171 aa).

His-126, His-130, and His-136 together coordinate Zn(2+).

It belongs to the endoribonuclease YbeY family. Zn(2+) serves as cofactor.

It localises to the cytoplasm. Single strand-specific metallo-endoribonuclease involved in late-stage 70S ribosome quality control and in maturation of the 3' terminus of the 16S rRNA. In Rhizobium leguminosarum bv. trifolii (strain WSM2304), this protein is Endoribonuclease YbeY.